The chain runs to 375 residues: Protein RecA (375 aa).

The segment at 1 to 20 is disordered; the sequence is MPAEMKSAASGSDPRSSGER. 79–86 contributes to the ATP binding site; sequence GPESSGKT.

This sequence belongs to the RecA family.

The protein localises to the cytoplasm. In terms of biological role, can catalyze the hydrolysis of ATP in the presence of single-stranded DNA, the ATP-dependent uptake of single-stranded DNA by duplex DNA, and the ATP-dependent hybridization of homologous single-stranded DNAs. It interacts with LexA causing its activation and leading to its autocatalytic cleavage. The protein is Protein RecA of Parasynechococcus marenigrum (strain WH8102).